A 201-amino-acid chain; its full sequence is MSKVLVLKSSILAGYSQSNQLSDYFVEQWREKHSADEITVRDLAANPVPVLDGELVGALRPSDAPLTPRQQDALSLSDELIAELQAHDVIVIAAPMYNFNIPTQLKNYFDLVARAGVTFRYTEKGPEGLVTGKRAIVLTSRGGIHKDTPTDLVTPYLSLFLGFIGITDVNFVFAEGVAYGPEMATKAQSDAKAAIDALVSA.

Residues Ser10, 16 to 18, 96 to 99, and 140 to 143 contribute to the FMN site; these read SQS, MYNF, and SRGG.

Belongs to the azoreductase type 1 family. Homodimer. It depends on FMN as a cofactor.

The catalysed reaction is 2 a quinone + NADH + H(+) = 2 a 1,4-benzosemiquinone + NAD(+). The enzyme catalyses N,N-dimethyl-1,4-phenylenediamine + anthranilate + 2 NAD(+) = 2-(4-dimethylaminophenyl)diazenylbenzoate + 2 NADH + 2 H(+). Quinone reductase that provides resistance to thiol-specific stress caused by electrophilic quinones. Functionally, also exhibits azoreductase activity. Catalyzes the reductive cleavage of the azo bond in aromatic azo compounds to the corresponding amines. This Cronobacter sakazakii (strain ATCC BAA-894) (Enterobacter sakazakii) protein is FMN-dependent NADH:quinone oxidoreductase.